Reading from the N-terminus, the 782-residue chain is Homeotic protein proboscipedia (782 aa).

6 disordered regions span residues 1-23 (MQEV…ESPL), 153-195 (PQTP…VPEN), 251-336 (MKHK…GISS), 358-380 (SSVS…KDDG), 439-493 (IATP…QQQP), and 547-586 (YYNY…ADFE). Positions 164 to 169 (EYPWMK) match the Antp-type hexapeptide motif. Residues 198–257 (PRRLRTAYTNTQLLELEKEFHFNKYLCRPRRIEIAASLDLTERQVKVWFQNRRMKHKRQT) constitute a DNA-binding region (homeobox). Residues 308–321 (NNNTPSATNNNPSA) are compositionally biased toward low complexity. Residues 322-336 (GNLTPNSSLETGISS) are compositionally biased toward polar residues. Residues 452–463 (NGSGGGPAGGYF) are compositionally biased toward gly residues. The span at 464-493 (PGYYPSPKQQQQVQQQQLHPQQQQLPQQQP) shows a compositional bias: low complexity. Residues 563-580 (QQHHHHAQHHQQQQHHQN) show a composition bias toward basic residues.

Belongs to the Antp homeobox family. Proboscipedia subfamily.

It localises to the nucleus. Functionally, sequence-specific transcription factor which is part of a developmental regulatory system that provides cells with specific positional identities on the anterior-posterior axis. Controls development of mouthparts, and labial and maxillary palps. This is Homeotic protein proboscipedia (pb) from Drosophila melanogaster (Fruit fly).